The sequence spans 519 residues: Histidine--tRNA ligase, cytoplasmic (519 aa).

Residues Asp135 to Thr137, Arg162, Gln178, Asp182, Arg331, and Tyr335 to Tyr336 each bind L-histidine.

It belongs to the class-II aminoacyl-tRNA synthetase family. As to quaternary structure, homodimer.

The protein resides in the cytoplasm. It carries out the reaction tRNA(His) + L-histidine + ATP = L-histidyl-tRNA(His) + AMP + diphosphate + H(+). Functionally, catalyzes the ATP-dependent ligation of histidine to the 3'-end of its cognate tRNA, via the formation of an aminoacyl-adenylate intermediate (His-AMP). Plays a role in axon guidance. This chain is Histidine--tRNA ligase, cytoplasmic (hars1), found in Takifugu rubripes (Japanese pufferfish).